The chain runs to 331 residues: Anthranilate phosphoribosyltransferase (331 aa).

Residues Gly-79, 82-83 (GD), Thr-87, 89-92 (NIST), 107-115 (KHGNYGATS), and Ala-119 each bind 5-phospho-alpha-D-ribose 1-diphosphate. An anthranilate-binding site is contributed by Gly-79. Position 91 (Ser-91) interacts with Mg(2+). Asn-110 contacts anthranilate. Arg-165 contributes to the anthranilate binding site. Mg(2+)-binding residues include Asp-223 and Glu-224.

This sequence belongs to the anthranilate phosphoribosyltransferase family. Homodimer. It depends on Mg(2+) as a cofactor.

The enzyme catalyses N-(5-phospho-beta-D-ribosyl)anthranilate + diphosphate = 5-phospho-alpha-D-ribose 1-diphosphate + anthranilate. It functions in the pathway amino-acid biosynthesis; L-tryptophan biosynthesis; L-tryptophan from chorismate: step 2/5. In terms of biological role, catalyzes the transfer of the phosphoribosyl group of 5-phosphorylribose-1-pyrophosphate (PRPP) to anthranilate to yield N-(5'-phosphoribosyl)-anthranilate (PRA). The chain is Anthranilate phosphoribosyltransferase from Phocaeicola vulgatus (strain ATCC 8482 / DSM 1447 / JCM 5826 / CCUG 4940 / NBRC 14291 / NCTC 11154) (Bacteroides vulgatus).